Here is a 364-residue protein sequence, read N- to C-terminus: Nucleoporin SEH1 (364 aa).

WD repeat units lie at residues 10–49 (DHKDLIHDVSYDFHGRRMATCSSDQSVKVWDKGDDGEWHC), 55–96 (THSG…SNDK), 111–152 (DSRT…NLSQ), 160–210 (SCKL…RKYA), 217–258 (TVTD…RESA), and 276–315 (SHNSQVWRVSWNITSTLLASSGDDGCVRLWKANYMDNWKC).

This sequence belongs to the WD repeat SEC13 family. As to quaternary structure, component of the Nup107-160 subcomplex of the nuclear pore complex (NPC). The Nup107-160 subcomplex includes NUP160, NUP133, NUP107, NUP98, NUP85, NUP43, NUP37, SEH1 and SEC13. Component of the GATOR2 subcomplex, composed of MIOS, SEC13, SEH1L, WDR24 and WDR59. The GATOR2 complex interacts with CASTOR1 and CASTOR2; the interaction is negatively regulated by arginine. The GATOR2 complex interacts with SESN1, SESN2 and SESN3; the interaction is negatively regulated by amino acids.

The protein resides in the chromosome. Its subcellular location is the centromere. The protein localises to the kinetochore. It is found in the nucleus. It localises to the nuclear pore complex. The protein resides in the lysosome membrane. The GATOR2 complex is negatively regulated by the upstream amino acid sensors CASTOR1 and SESN2, which sequester the GATOR2 complex in absence of amino acids. In the presence of abundant amino acids, GATOR2 is released from CASTOR1 and SESN2 and activated. In terms of biological role, component of the Nup107-160 subcomplex of the nuclear pore complex (NPC). The Nup107-160 subcomplex is required for the assembly of a functional NPC. The Nup107-160 subcomplex is also required for normal kinetochore microtubule attachment, mitotic progression and chromosome segregation. This subunit plays a role in recruitment of the Nup107-160 subcomplex to the kinetochore. As a component of the GATOR2 complex, functions as an activator of the amino acid-sensing branch of the mTORC1 signaling pathway. The GATOR2 complex indirectly activates mTORC1 through the inhibition of the GATOR1 subcomplex. GATOR2 probably acts as an E3 ubiquitin-protein ligase toward GATOR1. In the presence of abundant amino acids, the GATOR2 complex mediates ubiquitination of the NPRL2 core component of the GATOR1 complex, leading to GATOR1 inactivation. In the absence of amino acids, GATOR2 is inhibited, activating the GATOR1 complex. The protein is Nucleoporin SEH1 (seh1l) of Danio rerio (Zebrafish).